The following is a 186-amino-acid chain: Dehydrin Rab18 (186 aa).

The disordered stretch occupies residues 1–186 (MASYQNRPGG…IKEKLPGGGR (186 aa)). Positions 30 to 85 (PMGGGGYGTGGGGGATGGQGYGTGGQGYGSGGQGYGTGGQGYGTGTGTEGFGTGGG) are enriched in gly residues. Residues 89–98 (HGQEQLHKES) are compositionally biased toward basic and acidic residues. Low complexity predominate over residues 105–116 (MLHRSGSGSSSS). Positions 133 to 144 (KIKEKLPGHHDQ) are enriched in basic and acidic residues. Gly residues predominate over residues 152 to 164 (GGMGSGYDAGGYG). Basic and acidic residues predominate over residues 165–186 (GEHHEKKGMMDKIKEKLPGGGR).

The protein belongs to the plant dehydrin family.

The chain is Dehydrin Rab18 (RAB18) from Arabidopsis thaliana (Mouse-ear cress).